A 331-amino-acid polypeptide reads, in one-letter code: Ketol-acid reductoisomerase (NADP(+)) (331 aa).

The KARI N-terminal Rossmann domain maps to 2–182; sequence VEIYYDDDAN…GGTRAGALRT (181 aa). NADP(+) contacts are provided by residues 25 to 28, S51, and S53; that span reads FGSQ. The active site involves H108. G134 serves as a coordination point for NADP(+). The KARI C-terminal knotted domain maps to 183-328; the sequence is TFTEETETDL…GKLRPMMSWI (146 aa). Residues D191, E195, E227, and E231 each contribute to the Mg(2+) site. S252 serves as a coordination point for substrate.

The protein belongs to the ketol-acid reductoisomerase family. Requires Mg(2+) as cofactor.

The enzyme catalyses (2R)-2,3-dihydroxy-3-methylbutanoate + NADP(+) = (2S)-2-acetolactate + NADPH + H(+). It catalyses the reaction (2R,3R)-2,3-dihydroxy-3-methylpentanoate + NADP(+) = (S)-2-ethyl-2-hydroxy-3-oxobutanoate + NADPH + H(+). Its pathway is amino-acid biosynthesis; L-isoleucine biosynthesis; L-isoleucine from 2-oxobutanoate: step 2/4. The protein operates within amino-acid biosynthesis; L-valine biosynthesis; L-valine from pyruvate: step 2/4. Involved in the biosynthesis of branched-chain amino acids (BCAA). Catalyzes an alkyl-migration followed by a ketol-acid reduction of (S)-2-acetolactate (S2AL) to yield (R)-2,3-dihydroxy-isovalerate. In the isomerase reaction, S2AL is rearranged via a Mg-dependent methyl migration to produce 3-hydroxy-3-methyl-2-ketobutyrate (HMKB). In the reductase reaction, this 2-ketoacid undergoes a metal-dependent reduction by NADPH to yield (R)-2,3-dihydroxy-isovalerate. This is Ketol-acid reductoisomerase (NADP(+)) from Parafrankia sp. (strain EAN1pec).